Here is a 191-residue protein sequence, read N- to C-terminus: Large ribosomal subunit protein bL9c (191 aa).

The transit peptide at 1–35 directs the protein to the chloroplast; that stretch reads MASPSCASTLPWTAAAFSYPRRLQTRRAPSLVIVA.

The protein belongs to the bacterial ribosomal protein bL9 family. Part of the 50S ribosomal subunit.

It is found in the plastid. The protein resides in the chloroplast. In terms of biological role, binds to the 23S rRNA. This Triticum aestivum (Wheat) protein is Large ribosomal subunit protein bL9c (RPL9).